A 45-amino-acid polypeptide reads, in one-letter code: uncharacterized protein (45 aa).

This is an uncharacterized protein from Dictyostelium discoideum (Social amoeba).